The chain runs to 754 residues: 5-methyltetrahydropteroyltriglutamate--homocysteine methyltransferase (754 aa).

5-methyltetrahydropteroyltri-L-glutamate is bound by residues 17–20 (RELK) and Lys-117. L-homocysteine is bound by residues 431 to 433 (IGS) and Glu-484. Residues 431–433 (IGS) and Glu-484 each bind L-methionine. Residues 515-516 (RC) and Trp-561 contribute to the 5-methyltetrahydropteroyltri-L-glutamate site. Asp-599 provides a ligand contact to L-homocysteine. Asp-599 contacts L-methionine. Position 605 (Glu-605) interacts with 5-methyltetrahydropteroyltri-L-glutamate. Positions 641, 643, and 665 each coordinate Zn(2+). His-694 (proton donor) is an active-site residue. A Zn(2+)-binding site is contributed by Cys-726.

Belongs to the vitamin-B12 independent methionine synthase family. Requires Zn(2+) as cofactor.

It catalyses the reaction 5-methyltetrahydropteroyltri-L-glutamate + L-homocysteine = tetrahydropteroyltri-L-glutamate + L-methionine. It functions in the pathway amino-acid biosynthesis; L-methionine biosynthesis via de novo pathway; L-methionine from L-homocysteine (MetE route): step 1/1. Functionally, catalyzes the transfer of a methyl group from 5-methyltetrahydrofolate to homocysteine resulting in methionine formation. In Salmonella enteritidis PT4 (strain P125109), this protein is 5-methyltetrahydropteroyltriglutamate--homocysteine methyltransferase.